A 277-amino-acid chain; its full sequence is Ethanolamine ammonia-lyase small subunit (277 aa).

Positions 164, 185, and 214 each coordinate adenosylcob(III)alamin.

This sequence belongs to the EutC family. In terms of assembly, the basic unit is a heterodimer which dimerizes to form tetramers. The heterotetramers trimerize; 6 large subunits form a core ring with 6 small subunits projecting outwards. Adenosylcob(III)alamin serves as cofactor.

The protein resides in the bacterial microcompartment. The enzyme catalyses ethanolamine = acetaldehyde + NH4(+). It participates in amine and polyamine degradation; ethanolamine degradation. In terms of biological role, catalyzes the deamination of various vicinal amino-alcohols to oxo compounds. Allows this organism to utilize ethanolamine as the sole source of nitrogen and carbon in the presence of external vitamin B12. This is Ethanolamine ammonia-lyase small subunit from Pseudomonas fluorescens (strain SBW25).